The following is a 776-amino-acid chain: DNA ligase (776 aa).

NAD(+) is bound by residues D31 to D35, S80 to L81, and E112. K114 serves as the catalytic N6-AMP-lysine intermediate. Residues R135, E172, K288, and K312 each coordinate NAD(+). Zn(2+) contacts are provided by C406, C409, C436, and C442. The region spanning A693–I776 is the BRCT domain.

This sequence belongs to the NAD-dependent DNA ligase family. LigA subfamily. Mg(2+) is required as a cofactor. It depends on Mn(2+) as a cofactor.

It carries out the reaction NAD(+) + (deoxyribonucleotide)n-3'-hydroxyl + 5'-phospho-(deoxyribonucleotide)m = (deoxyribonucleotide)n+m + AMP + beta-nicotinamide D-nucleotide.. In terms of biological role, DNA ligase that catalyzes the formation of phosphodiester linkages between 5'-phosphoryl and 3'-hydroxyl groups in double-stranded DNA using NAD as a coenzyme and as the energy source for the reaction. It is essential for DNA replication and repair of damaged DNA. The chain is DNA ligase from Pseudomonas putida (strain W619).